The following is a 143-amino-acid chain: Small ribosomal subunit protein uS12 (143 aa).

A compositionally biased stretch (basic residues) spans 1–20 (MGKCRGLRTARKLRSHRRDH). A disordered region spans residues 1–26 (MGKCRGLRTARKLRSHRRDHKWHDKQ). Residue Lys37 forms a Glycyl lysine isopeptide (Lys-Gly) (interchain with G-Cter in SUMO2) linkage. Lys54 carries the post-translational modification N6-succinyllysine. Pro62 carries the 3-hydroxyproline modification. Residue Lys135 is modified to N6-acetyllysine.

This sequence belongs to the universal ribosomal protein uS12 family. As to quaternary structure, component of the 40S small ribosomal subunit. Part of the small subunit (SSU) processome, composed of more than 70 proteins and the RNA chaperone small nucleolar RNA (snoRNA) U3. In terms of assembly, (Microbial infection) Interacts with the African swine fever virus (ASFV) ubiquitin-conjugating enzyme UBCv1; this interaction probably plays a role in the viral regulation of host protein synthesis. In terms of processing, hydroxylation at Pro-62 affects translation termination efficiency.

The protein localises to the cytoplasm. Its subcellular location is the cytosol. It localises to the rough endoplasmic reticulum. It is found in the nucleus. The protein resides in the nucleolus. Component of the ribosome, a large ribonucleoprotein complex responsible for the synthesis of proteins in the cell. The small ribosomal subunit (SSU) binds messenger RNAs (mRNAs) and translates the encoded message by selecting cognate aminoacyl-transfer RNA (tRNA) molecules. The large subunit (LSU) contains the ribosomal catalytic site termed the peptidyl transferase center (PTC), which catalyzes the formation of peptide bonds, thereby polymerizing the amino acids delivered by tRNAs into a polypeptide chain. The nascent polypeptides leave the ribosome through a tunnel in the LSU and interact with protein factors that function in enzymatic processing, targeting, and the membrane insertion of nascent chains at the exit of the ribosomal tunnel. Plays an important role in translational accuracy. Part of the small subunit (SSU) processome, first precursor of the small eukaryotic ribosomal subunit. During the assembly of the SSU processome in the nucleolus, many ribosome biogenesis factors, an RNA chaperone and ribosomal proteins associate with the nascent pre-rRNA and work in concert to generate RNA folding, modifications, rearrangements and cleavage as well as targeted degradation of pre-ribosomal RNA by the RNA exosome. The chain is Small ribosomal subunit protein uS12 (RPS23) from Sus scrofa (Pig).